Consider the following 488-residue polypeptide: Spermatogenesis-associated protein 6 (488 aa).

An N-terminal signal peptide occupies residues 1-17 (MPKVKALQCALALEIRS). The segment at 176–225 (HGRLQCRTSRSQKKKSKSPERSKYCINTKNYEQPTISSKSHSPSPYTKRR) is disordered. Residues 200–220 (CINTKNYEQPTISSKSHSPSP) are compositionally biased toward polar residues. S217 and S219 each carry phosphoserine. Residue K248 forms a Glycyl lysine isopeptide (Lys-Gly) (interchain with G-Cter in SUMO2) linkage. Phosphoserine is present on residues S265, S274, S325, S343, S346, S354, S424, S465, and S487.

It belongs to the SPATA6 family. In terms of assembly, interacts with MYL6. Specifically expressed in developing spermatids and mature spermatozoa (at protein level). Isoform 1 is weakly expressed in testis, ovary, thymus and placenta. Isoform 2 and isoform 3 are testis-specific. Expression isw higher in spermatids than in spermatocytes and spermatogonia.

Its subcellular location is the secreted. It localises to the cell projection. The protein resides in the cilium. It is found in the flagellum. Required for formation of the sperm connecting piece during spermiogenesis. Sperm connecting piece is essential for linking the developing flagellum to the head during late spermiogenesis. May be involved in myosin-based microfilament transport through interaction with myosin subunits. This chain is Spermatogenesis-associated protein 6, found in Mus musculus (Mouse).